Reading from the N-terminus, the 435-residue chain is MKFFLATLFASAVSSIAVDRLIPGAQIIPESDTRALLRVGGHHDKYHDRRTITIRPSRNDTDDVSRDFLWGIKHANHGGRLLLKKGEKYVIGRKLDLTFLDDIEVQLDGELKFTDDVSYWQENNFYYDFQKSITFWRWGGKDIKIFGTGLLNGNGQRWYNEFAGQEILDPDNEYYRPILFLTENATRISVEGITQLNSPCWTNFFIQSKDVSFDDVYIHAFSTNKSALPKNSDGFDSLNVDGLTVTNTRVDVGDDCFSPKPNTTNIFVQNLLCNNTHGVSMGSIGQYPGVMDIIEHAYIENVTLLNGQNGARLKAWAGQDVGYGRINNITYKNIRIENTDAPVVLDQCYFDIEAAECAQYPSQVNVTNILFENISGTSSGKNGKVVADLVCSPNAVCSDIQLKNINLTSPAGSPPEIVCEGVQGDIGVECQASAD.

Positions 1–15 (MKFFLATLFASAVSS) are cleaved as a signal peptide. N59, N184, and N224 each carry an N-linked (GlcNAc...) asparagine glycan. 5 PbH1 repeats span residues 208-239 (SKDV…DSLN), 240-261 (VDGL…SPKP), 262-283 (NTTN…SMGS), 294-315 (IEHA…RLKA), and 326-347 (INNI…VLDQ). The Proton donor role is filled by D254. C256 and C273 are joined by a disulfide. 2 N-linked (GlcNAc...) asparagine glycosylation sites follow: N262 and N274. H277 is a catalytic residue. N301, N328, N365, and N373 each carry an N-linked (GlcNAc...) asparagine glycan. Residues 366-388 (VTNILFENISGTSSGKNGKVVAD) form a PbH1 6 repeat. C391 and C397 are joined by a disulfide. The N-linked (GlcNAc...) asparagine glycan is linked to N406.

It belongs to the glycosyl hydrolase 28 family.

It is found in the secreted. The enzyme catalyses [(1-&gt;4)-alpha-D-galacturonosyl](n) + H2O = alpha-D-galacturonate + [(1-&gt;4)-alpha-D-galacturonosyl](n-1). In terms of biological role, specific in hydrolyzing the terminal glycosidic bond of polygalacturonic acid and oligogalacturonates. The chain is Probable exopolygalacturonase B (pgxB) from Aspergillus flavus (strain ATCC 200026 / FGSC A1120 / IAM 13836 / NRRL 3357 / JCM 12722 / SRRC 167).